Here is a 179-residue protein sequence, read N- to C-terminus: Large ribosomal subunit protein uL15 (179 aa).

Belongs to the universal ribosomal protein uL15 family. Part of the 50S ribosomal subunit.

Its function is as follows. Binds to the 23S rRNA. This chain is Large ribosomal subunit protein uL15, found in Archaeoglobus fulgidus (strain ATCC 49558 / DSM 4304 / JCM 9628 / NBRC 100126 / VC-16).